The chain runs to 288 residues: uncharacterized protein (288 aa).

A helical membrane pass occupies residues 92-112 (LPTILVILGVIVVIAIVYAII). Residues 121-183 (DDHNAASEKA…NDSEKLEIKA (63 aa)) form a disordered region. Basic and acidic residues-rich tracts occupy residues 136–146 (SKYEIPKDSTL) and 154–181 (SEKE…KLEI). The stretch at 147–185 (KENQNNSSEKETDTKKETKENEDKKKENDSEKLEIKAAG) forms a coiled coil.

It is found in the cell membrane. This is an uncharacterized protein from Bacillus subtilis (strain 168).